The primary structure comprises 127 residues: Glycine cleavage system H protein (127 aa).

Residues 24–105 enclose the Lipoyl-binding domain; the sequence is TLTVGVTDHA…AYAAWLFKLK (82 aa). Lys-65 bears the N6-lipoyllysine mark.

It belongs to the GcvH family. As to quaternary structure, the glycine cleavage system is composed of four proteins: P, T, L and H. (R)-lipoate is required as a cofactor.

In terms of biological role, the glycine cleavage system catalyzes the degradation of glycine. The H protein shuttles the methylamine group of glycine from the P protein to the T protein. The chain is Glycine cleavage system H protein from Azoarcus sp. (strain BH72).